The following is a 229-amino-acid chain: Potassium/proton antiporter CemA (229 aa).

A run of 3 helical transmembrane segments spans residues 6 to 26 (AFIP…ISLC), 107 to 127 (ILHF…SFWG), and 189 to 209 (ILSG…KYWI).

The protein belongs to the CemA family.

The protein resides in the plastid. It is found in the chloroplast inner membrane. It carries out the reaction K(+)(in) + H(+)(out) = K(+)(out) + H(+)(in). Functionally, contributes to K(+)/H(+) antiport activity by supporting proton efflux to control proton extrusion and homeostasis in chloroplasts in a light-dependent manner to modulate photosynthesis. Prevents excessive induction of non-photochemical quenching (NPQ) under continuous-light conditions. Indirectly promotes efficient inorganic carbon uptake into chloroplasts. The protein is Potassium/proton antiporter CemA of Draba nemorosa (Woodland whitlowgrass).